Reading from the N-terminus, the 105-residue chain is uncharacterized protein (105 aa).

2 disordered regions span residues 29 to 55 (HTRV…TDES) and 72 to 105 (EQRG…RSGR). The span at 72-81 (EQRGDRRAVR) shows a compositional bias: basic and acidic residues.

This is an uncharacterized protein from Streptomyces coelicolor (strain ATCC BAA-471 / A3(2) / M145).